The sequence spans 59 residues: Large ribosomal subunit protein uL30 (59 aa).

Belongs to the universal ribosomal protein uL30 family. In terms of assembly, part of the 50S ribosomal subunit.

The chain is Large ribosomal subunit protein uL30 from Geobacter sulfurreducens (strain ATCC 51573 / DSM 12127 / PCA).